Here is a 138-residue protein sequence, read N- to C-terminus: ATP synthase epsilon chain (138 aa).

It belongs to the ATPase epsilon chain family. In terms of assembly, F-type ATPases have 2 components, CF(1) - the catalytic core - and CF(0) - the membrane proton channel. CF(1) has five subunits: alpha(3), beta(3), gamma(1), delta(1), epsilon(1). CF(0) has three main subunits: a, b and c.

The protein resides in the cell inner membrane. Produces ATP from ADP in the presence of a proton gradient across the membrane. The chain is ATP synthase epsilon chain from Geobacter metallireducens (strain ATCC 53774 / DSM 7210 / GS-15).